Here is a 631-residue protein sequence, read N- to C-terminus: Anthrax toxin receptor-like (631 aa).

An N-terminal signal peptide occupies residues 1–27 (MGSHESLGPYFLVFLLLLLLPPPLFRA). Residues 28–353 (GSLRYHGPDW…TSTTCGIFRN (326 aa)) lie on the Extracellular side of the membrane. The region spanning 76–246 (DLYFILDKSG…KALRSTIDAL (171 aa)) is the VWFA domain. Residues Ser-84, Ser-86, and Thr-150 each coordinate a divalent metal cation. The chain crosses the membrane as a helical span at residues 354–374 (WLYFVPLLLLVPLLLCCVWRL). The Cytoplasmic segment spans residues 375 to 631 (CRKQTVKEPP…LSLPPSEPNF (257 aa)). The tract at residues 382–413 (EPPPVQKPEKEPEQEKPPSPPPPPPPPPPPLP) is disordered. The span at 388–397 (KPEKEPEQEK) shows a compositional bias: basic and acidic residues. Residues 398 to 413 (PPSPPPPPPPPPPPLP) show a composition bias toward pro residues.

This sequence belongs to the ATR family.

Its subcellular location is the membrane. This is Anthrax toxin receptor-like (ANTXRL) from Homo sapiens (Human).